Reading from the N-terminus, the 429-residue chain is MKPVKKKKTEEPELEPLCCCEYIDRNGEKNHVAACLCDCQDLDEGCDRWLTCKSLRPETCERITDTISDRLRIPWLRGAKKVNISILPPLVLLPVLLRVASWHFLLGVVVLTSLPMLALWYYYLTHRRKEQTLFFLSLGLFSLGYMYYVFLQEVVPQGHVGPAQLALLTCGLFLILVALYRAKKNPGYLSNPACNDKSPSNSQIECPIKKGQEKTKGFPGTDTSGSLNNRTLKDDAKGSSRVGLDSPAKSKEDWCAKCQLVRPARAWHCRICGICVRRMDHHCVWINSCVGESNHQAFILALSIFLLTSVYGISLTLNTICRDRSLFTALFYCPGVYANYSSALSFTCVWYSVIITAGMAYIFLIQLINISYNVTEREVQQALRQKTGRRLLCGLIVDTGQYNRGFLRNWLQFSTLGTRTVHTPAEDIV.

Residues 1–81 are Cytoplasmic-facing; it reads MKPVKKKKTE…RIPWLRGAKK (81 aa). Residues 82 to 102 form a helical membrane-spanning segment; sequence VNISILPPLVLLPVLLRVASW. A topological domain (lumenal) is located at residue His103. The chain crosses the membrane as a helical span at residues 104-124; that stretch reads FLLGVVVLTSLPMLALWYYYL. Residues 125–130 are Cytoplasmic-facing; that stretch reads THRRKE. The chain crosses the membrane as a helical span at residues 131-151; the sequence is QTLFFLSLGLFSLGYMYYVFL. The Lumenal segment spans residues 152–159; that stretch reads QEVVPQGH. The chain crosses the membrane as a helical span at residues 160 to 180; the sequence is VGPAQLALLTCGLFLILVALY. The Cytoplasmic portion of the chain corresponds to 181–296; sequence RAKKNPGYLS…NSCVGESNHQ (116 aa). The segment at 212-247 is disordered; that stretch reads QEKTKGFPGTDTSGSLNNRTLKDDAKGSSRVGLDSP. Positions 221–230 are enriched in polar residues; that stretch reads TDTSGSLNNR. One can recognise a DHHC domain in the interval 253-303; it reads DWCAKCQLVRPARAWHCRICGICVRRMDHHCVWINSCVGESNHQAFILALS. The active-site S-palmitoyl cysteine intermediate is the Cys283. Residues 297–317 traverse the membrane as a helical segment; that stretch reads AFILALSIFLLTSVYGISLTL. Residues 318-347 lie on the Lumenal side of the membrane; it reads NTICRDRSLFTALFYCPGVYANYSSALSFT. A helical transmembrane segment spans residues 348–368; sequence CVWYSVIITAGMAYIFLIQLI. The Cytoplasmic segment spans residues 369 to 429; it reads NISYNVTERE…TVHTPAEDIV (61 aa). The segment at 426–429 is interaction with NOS1; that stretch reads EDIV.

It belongs to the DHHC palmitoyltransferase family. Interacts with NOS1. Expressed in the brain (at protein level), with highest levels in olfactory bulb, piriform cortex and hippocampus.

It is found in the golgi apparatus membrane. Its subcellular location is the golgi apparatus. The protein localises to the trans-Golgi network membrane. It catalyses the reaction L-cysteinyl-[protein] + hexadecanoyl-CoA = S-hexadecanoyl-L-cysteinyl-[protein] + CoA. Palmitoyltransferase that could catalyze the addition of palmitate onto various protein substrates and be involved in a variety of cellular processes. Palmitoyltransferase that mediates palmitoylation of KCNMA1, regulating localization of KCNMA1 to the plasma membrane. May be involved in NOS1 regulation and targeting to the synaptic membrane. This is Palmitoyltransferase ZDHHC23 from Rattus norvegicus (Rat).